Here is a 115-residue protein sequence, read N- to C-terminus: Large ribosomal subunit protein bL20c (115 aa).

Belongs to the bacterial ribosomal protein bL20 family.

The protein localises to the plastid. It is found in the chloroplast. Binds directly to 23S ribosomal RNA and is necessary for the in vitro assembly process of the 50S ribosomal subunit. It is not involved in the protein synthesizing functions of that subunit. This Pleurastrum terricola (Filamentous green alga) protein is Large ribosomal subunit protein bL20c.